A 979-amino-acid polypeptide reads, in one-letter code: DNA ligase 4 (979 aa).

Residues 1–39 (MDSDEIMPDEEHPNVPVGDEESDIDEKYPNRPRNHSPTL) form a disordered region. ATP contacts are provided by E320, K322, L323, R327, E389, F430, E490, K495, K512, and K514. K322 functions as the N6-AMP-lysine intermediate in the catalytic mechanism. Residue E389 coordinates Mg(2+). E490 serves as a coordination point for Mg(2+). 2 consecutive BRCT domains span residues 721–814 (PSGH…PDFL) and 867–965 (LQES…RFQP).

This sequence belongs to the ATP-dependent DNA ligase family. It depends on Mg(2+) as a cofactor.

Its subcellular location is the nucleus. It carries out the reaction ATP + (deoxyribonucleotide)n-3'-hydroxyl + 5'-phospho-(deoxyribonucleotide)m = (deoxyribonucleotide)n+m + AMP + diphosphate.. In terms of biological role, DNA ligase involved in DNA non-homologous end joining (NHEJ); required for double-strand break (DSB) repair. This Aspergillus fumigatus (strain ATCC MYA-4609 / CBS 101355 / FGSC A1100 / Af293) (Neosartorya fumigata) protein is DNA ligase 4 (lig4).